We begin with the raw amino-acid sequence, 331 residues long: ADP,ATP carrier protein 2, mitochondrial (331 aa).

Solcar repeat units lie at residues 29-122, 134-226, and 238-320; these read KNFA…FKRM, KWFG…LKPV, and ASFA…LQIL. 5 helical membrane passes run 31 to 58, 99 to 123, 132 to 152, 202 to 223, and 237 to 257; these read FAID…VKLL, TANV…KRMF, YWKW…SSLF, FNIS…YDSL, and FASF…SYPI. Residues Arg-104 and Lys-116 each coordinate ADP. ADP is bound at residue Arg-261. Residues 261 to 266 are important for transport activity; the sequence is RRRMMM. Positions 261–266 match the Nucleotide carrier signature motif motif; that stretch reads RRRMMM. A helical transmembrane segment spans residues 297-317; that stretch reads AGANILRAIAGAGVLSGYDQL.

Belongs to the mitochondrial carrier (TC 2.A.29) family. As to quaternary structure, monomer.

It localises to the mitochondrion inner membrane. It catalyses the reaction ADP(in) + ATP(out) = ADP(out) + ATP(in). The matrix-open state (m-state) is inhibited by the membrane-permeable bongkrekic acid (BKA). The cytoplasmic-open state (c-state) is inhibited by the membrane-impermeable toxic inhibitor carboxyatractyloside (CATR). Functionally, ADP:ATP antiporter that mediates import of ADP into the mitochondrial matrix for ATP synthesis, and export of ATP out to fuel the cell. Cycles between the cytoplasmic-open state (c-state) and the matrix-open state (m-state): operates by the alternating access mechanism with a single substrate-binding site intermittently exposed to either the cytosolic (c-state) or matrix (m-state) side of the inner mitochondrial membrane. In Triticum aestivum (Wheat), this protein is ADP,ATP carrier protein 2, mitochondrial (ANT-G2).